Consider the following 490-residue polypeptide: Aspartyl aminopeptidase 4 (490 aa).

Histidine 97 serves as a coordination point for Zn(2+). Position 173 (histidine 173) interacts with substrate. Zn(2+) is bound by residues aspartate 273, glutamate 308, glutamate 309, and aspartate 362. Position 308 (glutamate 308) interacts with substrate. Substrate-binding residues include aspartate 362, histidine 365, lysine 390, and tyrosine 397. Residue histidine 456 coordinates Zn(2+).

It belongs to the peptidase M18 family. As to quaternary structure, tetrahedron-shaped homododecamer built from six homodimers. Zn(2+) serves as cofactor.

The protein localises to the cytoplasm. The protein resides in the vacuole lumen. It catalyses the reaction Release of an N-terminal aspartate or glutamate from a peptide, with a preference for aspartate.. Its activity is regulated as follows. The metalloproteases inhibitors EDTA and 1.10-phenanthroline both inhibit the activity, whereas bestatin, an inhibitor of most aminopeptidases, does not affect enzyme activity. In terms of biological role, aspartyl aminopeptidase that contributes to peptide degradation both in the cytosol and the vacuole. Cells may respond to environmental conditions by changing the distributions of the cytosolic enzyme to the vacuole when cells need more active vacuolar degradation. The sequence is that of Aspartyl aminopeptidase 4 (APE4) from Saccharomyces cerevisiae (strain ATCC 204508 / S288c) (Baker's yeast).